Consider the following 310-residue polypeptide: Methionyl-tRNA formyltransferase (310 aa).

111-114 (SLLP) lines the (6S)-5,6,7,8-tetrahydrofolate pocket.

Belongs to the Fmt family.

The enzyme catalyses L-methionyl-tRNA(fMet) + (6R)-10-formyltetrahydrofolate = N-formyl-L-methionyl-tRNA(fMet) + (6S)-5,6,7,8-tetrahydrofolate + H(+). In terms of biological role, attaches a formyl group to the free amino group of methionyl-tRNA(fMet). The formyl group appears to play a dual role in the initiator identity of N-formylmethionyl-tRNA by promoting its recognition by IF2 and preventing the misappropriation of this tRNA by the elongation apparatus. This is Methionyl-tRNA formyltransferase from Nitrobacter hamburgensis (strain DSM 10229 / NCIMB 13809 / X14).